The following is a 483-amino-acid chain: Zinc metalloproteinase/disintegrin (483 aa).

The signal sequence occupies residues 1 to 20 (MIQVLLVTVCLAVFPYQGSS). Residues 21–190 (IILESGNVND…KASQLYLTPE (170 aa)) constitute a propeptide that is removed on maturation. The 199-residue stretch at 197 to 395 (RYVKLAIVVD…YKPQCILNAP (199 aa)) folds into the Peptidase M12B domain. Intrachain disulfides connect Cys308-Cys390, Cys352-Cys374, and Cys354-Cys357. Residue His333 participates in Zn(2+) binding. Glu334 is a catalytic residue. Zn(2+)-binding residues include His337 and His343. A propeptide spanning residues 396–411 (LRTDTVSTPVSGNELL) is cleaved from the precursor. Residues 403–483 (TPVSGNELLE…SDDCPRWNDL (81 aa)) enclose the Disintegrin domain. 6 cysteine pairs are disulfide-bonded: Cys417–Cys432, Cys419–Cys427, Cys426–Cys449, Cys440–Cys446, Cys445–Cys470, and Cys458–Cys477. A Cell attachment site motif is present at residues 462-464 (RGD).

Belongs to the venom metalloproteinase (M12B) family. P-II subfamily. P-IIa sub-subfamily. In terms of assembly, monomer. It depends on Zn(2+) as a cofactor. As to expression, expressed by the venom gland.

Its subcellular location is the secreted. In terms of biological role, impairs hemostasis in the envenomed animal. Functionally, inhibits ADP- and collagen-induced human platelet aggregation with IC(50) of 123 and 135 nM, respectively. Inhibits sperm-egg binding in a concentration-dependent manner, but has no effect on the fusion of sperm-egg. This is Zinc metalloproteinase/disintegrin from Protobothrops jerdonii (Jerdon's pitviper).